The following is a 201-amino-acid chain: Ras-related protein Rab-1C (201 aa).

The tract at residues 1-20 (MGCSPSKEGNGSFSSTSTSF) is disordered. The N-myristoyl glycine moiety is linked to residue Gly2. A lipid anchor (S-palmitoyl cysteine) is attached at Cys3. Residues 40–48 (GDSGVGKSC), 58–65 (FTDSYIST), 88–92 (DTAGQ), 146–149 (NKCD), and 176–178 (SAK) contribute to the GTP site. Residues 62–70 (YISTIGVDF) carry the Effector region motif.

Belongs to the small GTPase superfamily. Rab family. Post-translationally, although this sequence lacks the C-terminal cysteine motifs subject to isoprenylation in other Rab proteins, it does have N-terminal myristoylation and S-palmitoylation sequence motifs.

The chain is Ras-related protein Rab-1C (Rab1C) from Dictyostelium discoideum (Social amoeba).